The primary structure comprises 798 residues: General transcription and DNA repair factor IIH helicase/translocase subunit XPB (798 aa).

Disordered stretches follow at residues 1–62 (MGPP…EQIN) and 235–254 (PPGATDKPTPDPAAAAGADG). The Nuclear localization signal signature appears at 6-22 (KSRKDRSGGDKFGKKRR). The span at 10–25 (DRSGGDKFGKKRRAED) shows a compositional bias: basic and acidic residues. Positions 33-42 (DDNDSLDATE) are enriched in acidic residues. Positions 343–504 (MFGNGRARSG…DLNFLIGPKL (162 aa)) constitute a Helicase ATP-binding domain. 360–367 (AGKSLVGV) is an ATP binding site. Positions 457–460 (DEVH) match the DEVH box motif. The region spanning 558 to 713 (RSCQFLIKYH…KVITHLKGMD (156 aa)) is the Helicase C-terminal domain. Positions 746-765 (LPGEPGYRPSGSGGAVRRVG) are disordered.

The protein belongs to the helicase family. RAD25/XPB subfamily. In terms of assembly, component of the 7-subunit TFIIH core complex composed of haywire/XPB/ERCC3, XPD/ERCC2, GTF2H1, GTF2H2, GTF2H3, GTF2H4 and GTF2H5, which is active in NER. The core complex associates with the 3-subunit CDK-activating kinase (CAK) module composed of CCNH/cyclin H, CDK7 and MNAT1 to form the 10-subunit holoenzyme (holo-TFIIH) active in transcription. Interacts with PUF60. Interacts with ATF7IP. Interacts with Epstein-Barr virus EBNA2.

It localises to the nucleus. It catalyses the reaction Couples ATP hydrolysis with the unwinding of duplex DNA by translocating in the 3'-5' direction.. The enzyme catalyses ATP + H2O = ADP + phosphate + H(+). Its function is as follows. ATP-dependent 3'-5' DNA helicase/translocase; binds dsDNA rather than ssDNA, unzipping it in a translocase rather than classical helicase activity. Component of the general transcription and DNA repair factor IIH (TFIIH) core complex. When complexed to CDK-activating kinase (CAK), involved in RNA transcription by RNA polymerase II. The ATPase activity of XPB/ERCC3, but not its helicase activity, is required for DNA opening; it may wrap around the damaged DNA wedging it open, causing localized melting and twisting that allows XPD/ERCC2 helicase to anchor. The ATP-dependent helicase activity of XPB/ERCC3 may be required for promoter escape. Also involved in transcription-coupled nucleotide excision repair (NER) of damaged DNA. In NER, TFIIH acts by opening DNA around the lesion to allow the excision of the damaged oligonucleotide and its replacement by a new DNA fragment. The structure of the TFIIH transcription complex differs from the NER-TFIIH complex; large movements by XPD/ERCC2 and XPB/ERCC3 are stabilized by XPA. The chain is General transcription and DNA repair factor IIH helicase/translocase subunit XPB (hay) from Drosophila melanogaster (Fruit fly).